A 362-amino-acid chain; its full sequence is Cyclic di-GMP phosphodiesterase PdeL (362 aa).

The HTH luxR-type domain occupies 18-83 (HLSLPGSVSE…TFWRDIFFQY (66 aa)). Positions 42–61 (VTEISQYRNRSAKTISHQKK) form a DNA-binding region, H-T-H motif. Residues 106–360 (HIVTPEAISL…KFISEWVMKA (255 aa)) form the EAL domain. Q127 provides a ligand contact to substrate. E141 contributes to the Mg(2+) binding site. Residues 144–145 (VR) and N200 contribute to the substrate site. Residues N200, E232, and D262 each coordinate Mg(2+). Residues D262, K286, 319–322 (EGVE), and Y341 contribute to the substrate site.

In terms of assembly, is in a fast thermodynamic monomer-homodimer equilibrium. Dimerization is required for PDE activity. Dimerization affinity is increased about 100-fold upon substrate binding. Mg(2+) is required as a cofactor. The cofactor is Mn(2+).

It catalyses the reaction 3',3'-c-di-GMP + H2O = 5'-phosphoguanylyl(3'-&gt;5')guanosine + H(+). With respect to regulation, strongly inhibited by Ca(2+). In terms of biological role, acts both as an enzyme and as a c-di-GMP sensor to couple transcriptional activity to the c-di-GMP status of the cell. Phosphodiesterase (PDE) that catalyzes the hydrolysis of cyclic-di-GMP (c-di-GMP) to 5'-pGpG. Also acts as a transcription factor to control its own expression. The polypeptide is Cyclic di-GMP phosphodiesterase PdeL (Escherichia coli (strain K12)).